The chain runs to 619 residues: Chaperone protein HscA homolog (619 aa).

It belongs to the heat shock protein 70 family.

In terms of biological role, chaperone involved in the maturation of iron-sulfur cluster-containing proteins. Has a low intrinsic ATPase activity which is markedly stimulated by HscB. The sequence is that of Chaperone protein HscA homolog from Acinetobacter baumannii (strain AB0057).